A 2602-amino-acid chain; its full sequence is Non-reducing polyketide synthase SAT8 (2602 aa).

Cys-130 acts as the Nucleophile; for transacylase activity in catalysis. The active-site Proton donor/acceptor; for transacylase activity is the His-249. Residues 379 to 398 form a disordered region; the sequence is MLENSTSPPSPAATSSNSHC. Low complexity predominate over residues 382–396; the sequence is NSTSPPSPAATSSNS. The Ketosynthase family 3 (KS3) domain maps to 404–822; it reads PRDIAIVGMS…GSNAAMVVTQ (419 aa). Active-site for beta-ketoacyl synthase activity residues include Cys-571, His-706, and His-745. The tract at residues 926 to 1216 is malonyl-CoA:ACP transacylase (MAT); it reads FGGQMSTFVG…AMARRSLDSN (291 aa). Residues 1298–1442 are N-terminal hotdog fold; that stretch reads GPLFGLLTFV…GKLDLLSSSE (145 aa). The PKS/mFAS DH domain occupies 1298 to 1618; it reads GPLFGLLTFV…YTRIPRHSMT (321 aa). Residues 1331 to 1616 are product template (PT) domain; sequence LVIPHIIART…IAYTRIPRHS (286 aa). His-1335 acts as the Proton acceptor; for dehydratase activity in catalysis. The C-terminal hotdog fold stretch occupies residues 1467–1618; the sequence is GDVSGLQGRS…YTRIPRHSMT (152 aa). The active-site Proton donor; for dehydratase activity is Asp-1524. In terms of domain architecture, Carrier spans 1658 to 1733; that stretch reads DTLKQTVGQI…AFVRYISKVV (76 aa). Ser-1692 carries the post-translational modification O-(pantetheine 4'-phosphoryl)serine. The tract at residues 1737 to 1772 is disordered; that stretch reads DDLGTPSHSDNDSHVTGTTATPNSSSASSDTHHGNS. Residues 1752-1765 are compositionally biased toward low complexity; the sequence is TGTTATPNSSSASS. The segment at 1979–2150 is methyltransferase domain; that stretch reads VEKVKDDFQG…GYGHVDWTDG (172 aa). Residues 2229 to 2530 are NADPH-binding domain; it reads IVVVTGATGS…IPLGEWVRKV (302 aa).

It depends on pantetheine 4'-phosphate as a cofactor.

Its pathway is mycotoxin biosynthesis. Functionally, non-reducing polyketide synthase; part of the satratoxin SC1 cluster involved in the biosynthesis of satratoxins, trichothecene mycotoxins that are associated with human food poisonings. Satratoxins are suggested to be made by products of multiple gene clusters (SC1, SC2 and SC3) that encode 21 proteins in all, including polyketide synthases, acetyltransferases, and other enzymes expected to modify the trichothecene skeleton. SC1 encodes 10 proteins, SAT1 to SAT10. The largest are SAT8, which encodes a putative polyketide synthase (PKS) with a conventional non-reducing architecture, and SAT10, a putative protein containing four ankyrin repeats and thus may be involved in protein scaffolding. The putative short-chain reductase SAT3 may assist the PKS in some capacity. SAT6 contains a secretory lipase domain and acts probably as a trichothecene esterase. SAT5 encodes a putative acetyltransferase, and so, with SAT6, may affect endogenous protection from toxicity. The probable transcription factor SAT9 may regulate the expression of the SC1 cluster. SC2 encodes proteins SAT11 to SAT16, the largest of which encodes the putative reducing PKS SAT13. SAT11 is a cytochrome P450 monooxygenase, while SAT14 and SAT16 are probable acetyltransferases. The SC2 cluster may be regulated by the transcription factor SAT15. SC3 is a small cluster that encodes 5 proteins, SAT17 to SAT21. SAT21 is a putative MFS-type transporter which may have a role in exporting secondary metabolites. The four other proteins putatively encoded in SC3 include the taurine hydroxylase-like protein SAT17, the O-methyltransferase SAT18, the acetyltransferase SAT19, and the Cys6-type zinc finger SAT20, the latter being probably involved in regulation of SC3 expression. The chain is Non-reducing polyketide synthase SAT8 from Stachybotrys chartarum (strain CBS 109288 / IBT 7711) (Toxic black mold).